A 403-amino-acid polypeptide reads, in one-letter code: Na(+)-translocating NADH-quinone reductase subunit B (403 aa).

9 helical membrane-spanning segments follow: residues M56–G76, A121–F141, I163–I183, W220–I240, I258–I278, I287–S307, L312–F332, W348–F368, and G371–I391. Residue T230 is modified to FMN phosphoryl threonine.

It belongs to the NqrB/RnfD family. In terms of assembly, composed of six subunits; NqrA, NqrB, NqrC, NqrD, NqrE and NqrF. FMN serves as cofactor.

The protein resides in the cell inner membrane. The enzyme catalyses a ubiquinone + n Na(+)(in) + NADH + H(+) = a ubiquinol + n Na(+)(out) + NAD(+). NQR complex catalyzes the reduction of ubiquinone-1 to ubiquinol by two successive reactions, coupled with the transport of Na(+) ions from the cytoplasm to the periplasm. NqrA to NqrE are probably involved in the second step, the conversion of ubisemiquinone to ubiquinol. The sequence is that of Na(+)-translocating NADH-quinone reductase subunit B from Stutzerimonas stutzeri (strain A1501) (Pseudomonas stutzeri).